The following is a 514-amino-acid chain: Peptide chain release factor 3 (514 aa).

One can recognise a tr-type G domain in the interval 8–268 (KKRRTFAIIS…TFLEFAPEPH (261 aa)). GTP is bound by residues 17–24 (SHPDAGKT), 85–89 (DTPGH), and 139–142 (NKLD).

It belongs to the TRAFAC class translation factor GTPase superfamily. Classic translation factor GTPase family. PrfC subfamily.

It localises to the cytoplasm. Increases the formation of ribosomal termination complexes and stimulates activities of RF-1 and RF-2. It binds guanine nucleotides and has strong preference for UGA stop codons. It may interact directly with the ribosome. The stimulation of RF-1 and RF-2 is significantly reduced by GTP and GDP, but not by GMP. The chain is Peptide chain release factor 3 from Streptococcus pyogenes serotype M5 (strain Manfredo).